A 240-amino-acid chain; its full sequence is Protein GrpE (240 aa).

Disordered regions lie at residues 1–54 (MSGD…NEAR) and 206–240 (VSMGPGPQDGASSQPAEAPAADAPAEDSGSGDGNG). Residues 215 to 233 (GASSQPAEAPAADAPAEDS) are compositionally biased toward low complexity.

Belongs to the GrpE family. Homodimer.

The protein resides in the cytoplasm. Functionally, participates actively in the response to hyperosmotic and heat shock by preventing the aggregation of stress-denatured proteins, in association with DnaK and GrpE. It is the nucleotide exchange factor for DnaK and may function as a thermosensor. Unfolded proteins bind initially to DnaJ; upon interaction with the DnaJ-bound protein, DnaK hydrolyzes its bound ATP, resulting in the formation of a stable complex. GrpE releases ADP from DnaK; ATP binding to DnaK triggers the release of the substrate protein, thus completing the reaction cycle. Several rounds of ATP-dependent interactions between DnaJ, DnaK and GrpE are required for fully efficient folding. The sequence is that of Protein GrpE from Synechococcus sp. (strain WH7803).